An 86-amino-acid polypeptide reads, in one-letter code: Large ribosomal subunit protein bL31B (86 aa).

The protein belongs to the bacterial ribosomal protein bL31 family. Type B subfamily. As to quaternary structure, part of the 50S ribosomal subunit.

The protein is Large ribosomal subunit protein bL31B of Vibrio campbellii (strain ATCC BAA-1116).